The primary structure comprises 236 residues: Probable transcriptional regulatory protein UU295 (236 aa).

The protein belongs to the TACO1 family.

It is found in the cytoplasm. The polypeptide is Probable transcriptional regulatory protein UU295 (Ureaplasma parvum serovar 3 (strain ATCC 700970)).